The primary structure comprises 541 residues: Calcium-dependent protein kinase 25 (541 aa).

Gly residues predominate over residues 1–11 (MGQCCTGGGKA). Positions 1 to 74 (MGQCCTGGGK…AGPIGEVLER (74 aa)) are disordered. Gly2 carries N-myristoyl glycine lipidation. The span at 38-67 (AKQQPCSPAAKAAATEAAAAASSSKKPAGP) shows a compositional bias: low complexity. Residues 83 to 341 (YSIGKELGRG…AFQVLNHPWI (259 aa)) enclose the Protein kinase domain. Residues 89–97 (LGRGQFGVT) and Lys112 contribute to the ATP site. Asp207 functions as the Proton acceptor in the catalytic mechanism. Residues 347 to 377 (APDVPLDNVVLNRLKQFRAMNQFKKAALRII) form an autoinhibitory domain region. 4 EF-hand domains span residues 384–419 (EEIK…QGTK), 420–455 (FSDN…MNKM), 456–491 (DREE…QGLY), and 493–526 (ANEI…GSGC). 19 residues coordinate Ca(2+): Asp397, Asp399, Ser401, Thr403, Glu408, Asp433, Asp435, Asn437, Glu444, Asp469, Asp471, Ser473, Tyr475, Glu480, Asp504, Asn506, Asp508, Arg510, and Glu515.

Belongs to the protein kinase superfamily. Ser/Thr protein kinase family. CDPK subfamily. Specifically expressed in heading panicles, spikelets and mature pollen grains. Not expressed in vegetative tissues.

The protein localises to the membrane. It carries out the reaction L-seryl-[protein] + ATP = O-phospho-L-seryl-[protein] + ADP + H(+). The catalysed reaction is L-threonyl-[protein] + ATP = O-phospho-L-threonyl-[protein] + ADP + H(+). Its activity is regulated as follows. Activated by calcium. Autophosphorylation may play an important role in the regulation of the kinase activity. May play a role in signal transduction pathways that involve calcium as a second messenger. The sequence is that of Calcium-dependent protein kinase 25 from Oryza sativa subsp. japonica (Rice).